The sequence spans 546 residues: Aladin (546 aa).

C2 is subject to N-acetylcysteine. A Phosphoserine modification is found at S33. WD repeat units lie at residues 142-180 (EFAQVTNWSSCCLRVFAWHPHTNKFAVALLDDSVRVYNA), 183-222 (TIVPSLKHRLQRNVASLAWKPLSASVLAVACQSCILIWTL), 234-274 (GCAQ…VWDV), 280-316 (VPLPWFRGGGVTNLLWSPDGSKILATTPSAVFRVWEA), 324-380 (WPTL…IVAD), 386-433 (IQTP…LFRT), and 442-482 (LPCG…IAHI). S495, S511, S522, and S525 each carry phosphoserine. The disordered stretch occupies residues 500–546 (RAQEPPAGGGGSIHDLPLFTETSPTSAPWDPLPGPPPVLPHSPHSHL). Pro residues predominate over residues 529–539 (DPLPGPPPVLP). S541 is modified (phosphoserine). Positions 544-546 (SHL) match the Microbody targeting signal motif.

In terms of assembly, interacts with NDC1, the interaction is required for nuclear pore localization. Interacts with the inactive form aurora kinase AURKA. Interacts with PGRMC2. Widely expressed. Particularly abundant in cerebellum, corpus callosum, adrenal gland, pituitary gland, gastrointestinal structures and fetal lung.

It is found in the nucleus. The protein localises to the nuclear pore complex. It localises to the cytoplasm. Its subcellular location is the cytoskeleton. The protein resides in the spindle pole. It is found in the nucleus envelope. Plays a role in the normal development of the peripheral and central nervous system. Required for the correct localization of aurora kinase AURKA and the microtubule minus end-binding protein NUMA1 as well as a subset of AURKA targets which ensures proper spindle formation and timely chromosome alignment. The sequence is that of Aladin (AAAS) from Homo sapiens (Human).